Consider the following 308-residue polypeptide: U-box domain-containing protein 54 (308 aa).

Positions 172 to 235 are disordered; it reads FSEFSTSAEK…NESDEDPRLE (64 aa). Basic and acidic residues predominate over residues 210 to 227; it reads ESPKKGRKETIEKSKSNE. The U-box domain maps to 232-306; the sequence is PRLEDFKCPI…KDWLEKNPNY (75 aa).

It carries out the reaction S-ubiquitinyl-[E2 ubiquitin-conjugating enzyme]-L-cysteine + [acceptor protein]-L-lysine = [E2 ubiquitin-conjugating enzyme]-L-cysteine + N(6)-ubiquitinyl-[acceptor protein]-L-lysine.. The protein operates within protein modification; protein ubiquitination. Functions as an E3 ubiquitin ligase. The protein is U-box domain-containing protein 54 (PUB54) of Arabidopsis thaliana (Mouse-ear cress).